A 144-amino-acid polypeptide reads, in one-letter code: Deoxyuridine 5'-triphosphate nucleotidohydrolase (144 aa).

Residues 63 to 65 (RSG), N76, and 80 to 82 (TVD) contribute to the substrate site.

Belongs to the dUTPase family. It depends on Mg(2+) as a cofactor.

The enzyme catalyses dUTP + H2O = dUMP + diphosphate + H(+). It functions in the pathway pyrimidine metabolism; dUMP biosynthesis; dUMP from dCTP (dUTP route): step 2/2. Its function is as follows. This enzyme is involved in nucleotide metabolism: it produces dUMP, the immediate precursor of thymidine nucleotides and it decreases the intracellular concentration of dUTP so that uracil cannot be incorporated into DNA. The protein is Deoxyuridine 5'-triphosphate nucleotidohydrolase of Flavobacterium johnsoniae (strain ATCC 17061 / DSM 2064 / JCM 8514 / BCRC 14874 / CCUG 350202 / NBRC 14942 / NCIMB 11054 / UW101) (Cytophaga johnsonae).